Here is a 273-residue protein sequence, read N- to C-terminus: Nitrogenase iron protein (273 aa).

8–15 (GKGGIGKS) lines the ATP pocket. Residue Cys-94 coordinates [4Fe-4S] cluster. Arg-97 carries the ADP-ribosylarginine; by dinitrogenase reductase ADP-ribosyltransferase modification. Cys-130 is a [4Fe-4S] cluster binding site.

Belongs to the NifH/BchL/ChlL family. In terms of assembly, homodimer. It depends on [4Fe-4S] cluster as a cofactor. Post-translationally, the reversible ADP-ribosylation of Arg-97 inactivates the nitrogenase reductase and regulates nitrogenase activity.

It catalyses the reaction N2 + 8 reduced [2Fe-2S]-[ferredoxin] + 16 ATP + 16 H2O = H2 + 8 oxidized [2Fe-2S]-[ferredoxin] + 2 NH4(+) + 16 ADP + 16 phosphate + 6 H(+). In terms of biological role, the key enzymatic reactions in nitrogen fixation are catalyzed by the nitrogenase complex, which has 2 components: the iron protein and the molybdenum-iron protein. The protein is Nitrogenase iron protein of Desulforapulum autotrophicum (strain ATCC 43914 / DSM 3382 / VKM B-1955 / HRM2) (Desulfobacterium autotrophicum).